Consider the following 253-residue polypeptide: MTEPLETELYLSSEKDELFEKGPWPKPFAFNAEVVKVFDNMVCRSVPLYREVVAGAVHWTRAYYQPKTRIIDIGCSTGTFLELLGRFLKQPAILVGIDNSSDMLDKAKEKLAQVEQIHQIELICESAENCSFEKSSVVVMNYTLQFLSLPQRQKLLRAIYQGLVPGGLLFISEKIRSDCPQFQETITHHYEAFKAKNGYAQNEIERKKEALENVLIPLSEAEQLQMLKQSGFSYIESLIKLHNFVSFVAFKSD.

S-adenosyl-L-methionine is bound by residues Y49, 74-76, 98-99, and N141; these read GCS and DN.

Belongs to the class I-like SAM-binding methyltransferase superfamily. Cx-SAM synthase family.

It carries out the reaction prephenate + S-adenosyl-L-methionine = carboxy-S-adenosyl-L-methionine + 3-phenylpyruvate + H2O. Functionally, catalyzes the conversion of S-adenosyl-L-methionine (SAM) to carboxy-S-adenosyl-L-methionine (Cx-SAM). The protein is Carboxy-S-adenosyl-L-methionine synthase of Trichodesmium erythraeum (strain IMS101).